The following is a 292-amino-acid chain: Nitrogenase iron protein 2 (292 aa).

ATP is bound at residue 8–15 (GKGGIGKS). [4Fe-4S] cluster is bound at residue Cys-106. Arg-109 carries the ADP-ribosylarginine; by dinitrogenase reductase ADP-ribosyltransferase modification. Residue Cys-142 coordinates [4Fe-4S] cluster.

This sequence belongs to the NifH/BchL/ChlL family. Homodimer. Requires [4Fe-4S] cluster as cofactor. Post-translationally, the reversible ADP-ribosylation of Arg-109 inactivates the nitrogenase reductase and regulates nitrogenase activity.

The enzyme catalyses N2 + 8 reduced [2Fe-2S]-[ferredoxin] + 16 ATP + 16 H2O = H2 + 8 oxidized [2Fe-2S]-[ferredoxin] + 2 NH4(+) + 16 ADP + 16 phosphate + 6 H(+). Functionally, the key enzymatic reactions in nitrogen fixation are catalyzed by the nitrogenase complex, which has 2 components: the iron protein and the molybdenum-iron protein. The sequence is that of Nitrogenase iron protein 2 (nifH2) from Methanothermococcus thermolithotrophicus (Methanococcus thermolithotrophicus).